Consider the following 440-residue polypeptide: MLSTVFRRTMATGRHFIAVCQMTSDNDLEKNFQAAKNMIERAGEKKCEMVFLPECFDFIGLNKNEQIDLAMATDCEYMEKYRELARKHNIWLSLGGLHHKDPSDAAHPWNTHLIIDSDGVTRAEYNKLHLFDLEIPGKVRLMESEFSKAGTEMIPPVDTPIGRLGLSICYDVRFPELSLWNRKRGAQLLSFPSAFTLNTGLAHWETLLRARAIENQCYVVAAAQTGAHNPKRQSYGHSMVVDPWGAVVAQCSERVDMCFAEIDLSYVDTLREMQPVFSHRRSDLYTLHINEKSSETGGLKFARFNIPADHIFYSTPHSFVFVNLKPVTDGHVLVSPKRVVPRLTDLTDAETADLFIVAKKVQAMLEKHHNVTSTTICVQDGKDAGQTVPHVHIHILPRRAGDFGDNEIYQKLASHDKEPERKPRSNEQMAEEAVVYRNLM.

In terms of domain architecture, CN hydrolase spans 14 to 264 (RHFIAVCQMT…VDMCFAEIDL (251 aa)). Residues E54, K127, and C169 contribute to the active site. The HIT domain maps to 297-405 (GGLKFARFNI…LPRRAGDFGD (109 aa)). The Histidine triad motif motif lies at 390-394 (HVHIH). H392 functions as the Tele-AMP-histidine intermediate in the catalytic mechanism.

The protein in the N-terminal section; belongs to the UPF0012 family. In terms of assembly, homotetramer. Mn(2+) is required as a cofactor.

It catalyses the reaction P(1),P(3)-bis(5'-adenosyl) triphosphate + H2O = AMP + ADP + 2 H(+). Its function is as follows. Cleaves A-5'-PPP-5'A to yield AMP and ADP. This Caenorhabditis elegans protein is Nitrilase and fragile histidine triad fusion protein NitFhit.